We begin with the raw amino-acid sequence, 117 residues long: Putative phosphotransferase enzyme IIB component MG129 (117 aa).

A helical transmembrane segment spans residues Met1–Val21. Positions Pro42–Gln117 constitute a PTS EIIB type-1 domain.

It localises to the membrane. Functionally, the phosphoenolpyruvate-dependent sugar phosphotransferase system (PTS), a major carbohydrate active -transport system, catalyzes the phosphorylation of incoming sugar substrates concomitant with their translocation across the cell membrane. This is Putative phosphotransferase enzyme IIB component MG129 from Mycoplasma genitalium (strain ATCC 33530 / DSM 19775 / NCTC 10195 / G37) (Mycoplasmoides genitalium).